Consider the following 445-residue polypeptide: FAS-associated factor 2 (445 aa).

Residues 12 to 53 (EQTEKLLQFQDLTGIESMDQCRQTLQQHNWNIEAAVQDRLNE) form the UBA domain. The stretch at 275–353 (SERLEREERN…ERKSECLPAE (79 aa)) forms a coiled coil. The segment covering 303-348 (ADQEKERKKKEKQEQKRREEEEAQLKQMLEERKKRNLEEEKERKSE) has biased composition (basic and acidic residues). The interval 303–354 (ADQEKERKKKEKQEQKRREEEEAQLKQMLEERKKRNLEEEKERKSECLPAEP) is disordered. One can recognise a UBX domain in the interval 357–439 (DHPDNVKIIF…GLSQSQLLFV (83 aa)).

Its subcellular location is the cytoplasm. The protein localises to the lipid droplet. It localises to the endoplasmic reticulum. Its function is as follows. Plays an important role in endoplasmic reticulum-associated degradation (ERAD) that mediates ubiquitin-dependent degradation of misfolded endoplasmic reticulum proteins. Involved in inhibition of lipid droplet degradation. Involved in stress granule disassembly. The chain is FAS-associated factor 2 (faf2) from Xenopus tropicalis (Western clawed frog).